We begin with the raw amino-acid sequence, 132 residues long: Hemoglobin subunit beta-1 (132 aa).

Positions 1–132 (WSKIDIDVCG…VVSALGRQYH (132 aa)) constitute a Globin domain. Heme b is bound by residues His49 and His78.

This sequence belongs to the globin family. In terms of assembly, hb 1 is a heterotetramer of two alpha-1 and two beta-1 chains. Hb 2 is a heterotetramer of two alpha-2 and two beta-1 chains. As to expression, red blood cells.

Involved in oxygen transport from gills to the various peripheral tissues. This is Hemoglobin subunit beta-1 (hbb1) from Arctogadus glacialis (Arctic cod).